A 698-amino-acid chain; its full sequence is Endogenous retrovirus group K member 9 Env polyprotein (698 aa).

The segment at 1-47 (MNPSEMQRKAPPRRRRHRNRAPLTHKMNKMVTSEEQMKLPSTKKAEP) is disordered. The first 89 residues, 1–89 (MNPSEMQRKA…ALMIVSMVVS (89 aa)), serve as a signal peptide directing secretion. A compositionally biased stretch (basic residues) spans 10–20 (APPRRRRHRNR). The Extracellular segment spans residues 90-631 (LPMPAGAAAA…NLNPVTWVKT (542 aa)). N-linked (GlcNAc...) asparagine glycans are attached at residues Asn100, Asn128, Asn153, Asn273, Asn354, Asn371, and Asn460. Residues 465–485 (FIFTLIAVIMGLIAVTATAAV) form a fusion peptide region. 4 N-linked (GlcNAc...) asparagine glycosylation sites follow: Asn506, Asn553, Asn565, and Asn584. A helical transmembrane segment spans residues 632–652 (IGSTTIINLILILVCLFCLLL). Over 653–698 (VCRCTQQLRRDSDHRERAMMTMAVLSKRKGGNVGKSKRDQIVTVSV) the chain is Cytoplasmic.

The protein belongs to the beta type-B retroviral envelope protein family. HERV class-II K(HML-2) env subfamily. The surface (SU) and transmembrane (TM) proteins form a heterodimer. SU and TM are attached by noncovalent interactions or by a labile interchain disulfide bond. Specific enzymatic cleavages in vivo yield the mature SU and TM proteins.

It is found in the cell membrane. The protein resides in the virion. Retroviral envelope proteins mediate receptor recognition and membrane fusion during early infection. Endogenous envelope proteins may have kept, lost or modified their original function during evolution. This endogenous envelope protein has lost its original fusogenic properties. Functionally, SU mediates receptor recognition. In terms of biological role, TM anchors the envelope heterodimer to the viral membrane through one transmembrane domain. The other hydrophobic domain, called fusion peptide, mediates fusion of the viral membrane with the target cell membrane. The chain is Endogenous retrovirus group K member 9 Env polyprotein (ERVK-9) from Homo sapiens (Human).